The chain runs to 272 residues: NH(3)-dependent NAD(+) synthetase (272 aa).

ATP is bound at residue 45-52 (GISGGQDS). D51 contacts Mg(2+). R138 lines the deamido-NAD(+) pocket. An ATP-binding site is contributed by T158. E163 provides a ligand contact to Mg(2+). The deamido-NAD(+) site is built by K171 and D178. 2 residues coordinate ATP: K187 and T209. Residue 258–259 (HK) participates in deamido-NAD(+) binding.

This sequence belongs to the NAD synthetase family. As to quaternary structure, homodimer.

The enzyme catalyses deamido-NAD(+) + NH4(+) + ATP = AMP + diphosphate + NAD(+) + H(+). Its pathway is cofactor biosynthesis; NAD(+) biosynthesis; NAD(+) from deamido-NAD(+) (ammonia route): step 1/1. Catalyzes the ATP-dependent amidation of deamido-NAD to form NAD. Uses ammonia as a nitrogen source. The protein is NH(3)-dependent NAD(+) synthetase of Bacillus cereus (strain G9842).